The following is a 101-amino-acid chain: Peroxisomal biogenesis factor 39 (101 aa).

It localises to the peroxisome. In terms of biological role, may be a peroxin involved in the PTS2-mediated protein import pathway. This is Peroxisomal biogenesis factor 39 from Homo sapiens (Human).